Consider the following 252-residue polypeptide: 2-succinyl-6-hydroxy-2,4-cyclohexadiene-1-carboxylate synthase (252 aa).

It belongs to the AB hydrolase superfamily. MenH family. Monomer.

The catalysed reaction is 5-enolpyruvoyl-6-hydroxy-2-succinyl-cyclohex-3-ene-1-carboxylate = (1R,6R)-6-hydroxy-2-succinyl-cyclohexa-2,4-diene-1-carboxylate + pyruvate. It functions in the pathway quinol/quinone metabolism; 1,4-dihydroxy-2-naphthoate biosynthesis; 1,4-dihydroxy-2-naphthoate from chorismate: step 3/7. It participates in quinol/quinone metabolism; menaquinone biosynthesis. In terms of biological role, catalyzes a proton abstraction reaction that results in 2,5-elimination of pyruvate from 2-succinyl-5-enolpyruvyl-6-hydroxy-3-cyclohexene-1-carboxylate (SEPHCHC) and the formation of 2-succinyl-6-hydroxy-2,4-cyclohexadiene-1-carboxylate (SHCHC). In Escherichia coli (strain ATCC 8739 / DSM 1576 / NBRC 3972 / NCIMB 8545 / WDCM 00012 / Crooks), this protein is 2-succinyl-6-hydroxy-2,4-cyclohexadiene-1-carboxylate synthase.